The chain runs to 85 residues: Type 3 secretion system needle filament protein (85 aa).

Residues 13–41 are a coiled coil; it reads LDTVANALKEQANAANKDVNDAIKALQGT.

The core secretion machinery of the T3SS is composed of approximately 20 different proteins, including cytoplasmic components, a base, an export apparatus and a needle. This subunit polymerizes and forms the helical needle filament. Forms a stable heterotrimeric complex with PscE and PscG in the cytoplasm, blocking it in a monomeric state and preventing its polymerization.

It localises to the secreted. The protein resides in the cell surface. Component of the type III secretion system (T3SS), also called injectisome, which is used to inject bacterial effector proteins into eukaryotic host cells, facilitating the establishment and dissemination of infection. PscF/SctF forms the external needle filament that protrudes from the bacterial surface. This Pseudomonas aeruginosa (strain ATCC 15692 / DSM 22644 / CIP 104116 / JCM 14847 / LMG 12228 / 1C / PRS 101 / PAO1) protein is Type 3 secretion system needle filament protein.